The following is a 119-amino-acid chain: MRKSYRIKKELEFQKVFETRNSFANKKFVVYVMDKPEQPHFRVGISVGKKIGNAVMRNYTKRRIRQSILEFKPLLRQDVDFLVIARPQASGLPMNEVKQQLEHVFKLAGLFASKQSEEE.

It belongs to the RnpA family. Consists of a catalytic RNA component (M1 or rnpB) and a protein subunit.

The enzyme catalyses Endonucleolytic cleavage of RNA, removing 5'-extranucleotides from tRNA precursor.. Its function is as follows. RNaseP catalyzes the removal of the 5'-leader sequence from pre-tRNA to produce the mature 5'-terminus. It can also cleave other RNA substrates such as 4.5S RNA. The protein component plays an auxiliary but essential role in vivo by binding to the 5'-leader sequence and broadening the substrate specificity of the ribozyme. The sequence is that of Ribonuclease P protein component from Pediococcus pentosaceus (strain ATCC 25745 / CCUG 21536 / LMG 10740 / 183-1w).